The following is a 262-amino-acid chain: tRNA 4-demethylwyosine(37)-methyltransferase Taw21 (262 aa).

S-adenosyl-L-methionine contacts are provided by residues His-108, Phe-125, 148 to 149 (DL), and 175 to 176 (DA).

This sequence belongs to the class I-like SAM-binding methyltransferase superfamily. TRM5/TYW2 family.

The protein localises to the cytoplasm. The enzyme catalyses 4-demethylwyosine(37) in tRNA(Phe) + S-adenosyl-L-methionine = isowyosine(37) in tRNA(Phe) + S-adenosyl-L-homocysteine + H(+). Functionally, catalyzes the C7-methylation of 4-demethylwyosine (imG-14) at position 37 in tRNA(Phe). This is tRNA 4-demethylwyosine(37)-methyltransferase Taw21 from Saccharolobus solfataricus (strain ATCC 35092 / DSM 1617 / JCM 11322 / P2) (Sulfolobus solfataricus).